A 538-amino-acid polypeptide reads, in one-letter code: MTGDTDPPKQSRTQYGSISSSPSPGPPQVPPGGTYLSEKIPIPNAEPGTFSLRKLWAFTGPGFLMSIAYLDPGNIQSDLQAGAVAGFKLLWVLLWATVLGLLCQRLAARLGVVTGKDLGEICHLYYPKVPRTLLWLNMELAIVGSDMQEVIGTAIAFNLLSAGRIPLWGGVLITVVDTFFFLYLNNYGLRKLEAFFAFLIAIMAFTFGYEYVVARPAQGALLRGLFLPSCSGCGQPELLQAVGIVGAIIMPHNIYLHSALVKSREVDRTRREDIREANMYFLIESTIALFVSFFINLFVMAVFGQAFYQQTNQAAFNICANSSLHDYAKIFPRNNLTVAVDFYQGGVILGCLFGPAALYIWAVGLLAAGQSSTMTGTYAGQFVMEGFLKLRWSRFARLLLTRSCAILPALLVAVFKELQDLSSLNDLLNVLQSLLLPFAVLPILTFTSMPALMQEFASGRVNKVITSSIMLLVCAINFYFLVSYLPSLPHPAYFGLVALLAVIYLGLTTYLVWTCLIAHGATLLVHSSHQHFLYGLLE.

The interval 1 to 36 (MTGDTDPPKQSRTQYGSISSSPSPGPPQVPPGGTYL) is disordered. The Cytoplasmic portion of the chain corresponds to 1 to 54 (MTGDTDPPKQSRTQYGSISSSPSPGPPQVPPGGTYLSEKIPIPNAEPGTFSLRK). The chain crosses the membrane as a helical span at residues 55–75 (LWAFTGPGFLMSIAYLDPGNI). Topologically, residues 76 to 81 (QSDLQA) are extracellular. A helical transmembrane segment spans residues 82–102 (GAVAGFKLLWVLLWATVLGLL). Over 103–139 (CQRLAARLGVVTGKDLGEICHLYYPKVPRTLLWLNME) the chain is Cytoplasmic. The chain crosses the membrane as a helical span at residues 140–160 (LAIVGSDMQEVIGTAIAFNLL). The Extracellular segment spans residues 161–164 (SAGR). A helical membrane pass occupies residues 165 to 185 (IPLWGGVLITVVDTFFFLYLN). The Cytoplasmic portion of the chain corresponds to 186–193 (NYGLRKLE). A helical transmembrane segment spans residues 194-214 (AFFAFLIAIMAFTFGYEYVVA). Residues 215–240 (RPAQGALLRGLFLPSCSGCGQPELLQ) lie on the Extracellular side of the membrane. A helical membrane pass occupies residues 241–261 (AVGIVGAIIMPHNIYLHSALV). Topologically, residues 262–286 (KSREVDRTRREDIREANMYFLIEST) are cytoplasmic. A helical transmembrane segment spans residues 287-307 (IALFVSFFINLFVMAVFGQAF). The Extracellular portion of the chain corresponds to 308–346 (YQQTNQAAFNICANSSLHDYAKIFPRNNLTVAVDFYQGG). N-linked (GlcNAc...) asparagine glycosylation is found at asparagine 321 and asparagine 335. The helical transmembrane segment at 347–367 (VILGCLFGPAALYIWAVGLLA) threads the bilayer. Over 368 to 394 (AGQSSTMTGTYAGQFVMEGFLKLRWSR) the chain is Cytoplasmic. The helical transmembrane segment at 395 to 415 (FARLLLTRSCAILPALLVAVF) threads the bilayer. Over 416–432 (KELQDLSSLNDLLNVLQ) the chain is Extracellular. The chain crosses the membrane as a helical span at residues 433–453 (SLLLPFAVLPILTFTSMPALM). The Cytoplasmic portion of the chain corresponds to 454 to 468 (QEFASGRVNKVITSS). The helical transmembrane segment at 469 to 489 (IMLLVCAINFYFLVSYLPSLP) threads the bilayer. The Extracellular segment spans residues 490 to 492 (HPA). The helical transmembrane segment at 493–513 (YFGLVALLAVIYLGLTTYLVW) threads the bilayer. Residues 514 to 538 (TCLIAHGATLLVHSSHQHFLYGLLE) lie on the Cytoplasmic side of the membrane.

It belongs to the NRAMP family.

The protein resides in the late endosome membrane. The protein localises to the lysosome membrane. The enzyme catalyses Zn(2+)(in) + H(+)(out) = Zn(2+)(out) + H(+)(in). It catalyses the reaction Fe(2+)(in) + H(+)(out) = Fe(2+)(out) + H(+)(in). The catalysed reaction is Mn(2+)(in) + H(+)(out) = Mn(2+)(out) + H(+)(in). Functionally, macrophage-specific antiporter that fluxes metal ions in either direction against a proton gradient. Localized to late endosomal lysosomal membranes, delivers bivalent cations from the cytosol into these acidic compartments where they may directly affect antimicrobial activity. Involved in iron metabolism and host natural resistance to infection with intracellular parasites. Pathogen resistance involves sequestration of Fe(2+) and Mn(2+), cofactors of both prokaryotic and eukaryotic catalases and superoxide dismutases, not only to protect the macrophage against its own generation of reactive oxygen species, but to deny the cations to the pathogen for synthesis of its protective enzymes. The protein is Natural resistance-associated macrophage protein 1 (SLC11A1) of Sus scrofa (Pig).